The chain runs to 121 residues: Histone H2B.6 (121 aa).

Residues 1 to 28 (MAPKAEKKPKVEKRVPGKEGETSKKKAK) are disordered. An N6-acetyllysine mark is found at K7 and K13.

It belongs to the histone H2B family. As to quaternary structure, the nucleosome is a histone octamer containing two molecules each of H2A, H2B, H3 and H4 assembled in one H3-H4 heterotetramer and two H2A-H2B heterodimers. The octamer wraps approximately 147 bp of DNA. Can be acetylated to form H2BK6ac and H2BK33ac. In terms of tissue distribution, expressed preferentially in meristematic tissues.

It is found in the nucleus. The protein localises to the chromosome. Core component of nucleosome. Nucleosomes wrap and compact DNA into chromatin, limiting DNA accessibility to the cellular machineries which require DNA as a template. Histones thereby play a central role in transcription regulation, DNA repair, DNA replication and chromosomal stability. DNA accessibility is regulated via a complex set of post-translational modifications of histones, also called histone code, and nucleosome remodeling. The polypeptide is Histone H2B.6 (TH123) (Triticum aestivum (Wheat)).